The chain runs to 364 residues: Aminomethyltransferase (364 aa).

The protein belongs to the GcvT family. As to quaternary structure, the glycine cleavage system is composed of four proteins: P, T, L and H.

The enzyme catalyses N(6)-[(R)-S(8)-aminomethyldihydrolipoyl]-L-lysyl-[protein] + (6S)-5,6,7,8-tetrahydrofolate = N(6)-[(R)-dihydrolipoyl]-L-lysyl-[protein] + (6R)-5,10-methylene-5,6,7,8-tetrahydrofolate + NH4(+). In terms of biological role, the glycine cleavage system catalyzes the degradation of glycine. This chain is Aminomethyltransferase, found in Geobacillus kaustophilus (strain HTA426).